Here is a 155-residue protein sequence, read N- to C-terminus: Regulatory protein RecX (155 aa).

It belongs to the RecX family.

The protein localises to the cytoplasm. In terms of biological role, modulates RecA activity. The chain is Regulatory protein RecX from Pseudomonas fluorescens (strain SBW25).